Reading from the N-terminus, the 35-residue chain is Alpha-amanitin proprotein 1 (35 aa).

A propeptide spanning residues 1–10 (MSDINATRLP) is cleaved from the precursor. A (3R,4R)-4,5-dihydroxyisoleucine; in form alpha-amanitin modification is found at Ile-11. Position 11 is a (3R,4S)-4-hydroxyisoleucine; in form gamma-amanitin (Ile-11). Residues 11 to 18 (IWGIGCNP) constitute a cross-link (cyclopeptide (Ile-Pro)). A cross-link (2'-cysteinyl-6'-hydroxytryptophan sulfoxide (Trp-Cys)) is located at residues 12–16 (WGIGC). Pro-18 is modified (4-hydroxyproline). The propeptide occupies 19–35 (CVGDDVTSVLTRGEALC).

This sequence belongs to the MSDIN fungal toxin family. Post-translationally, processed by the macrocyclase-peptidase enzyme POPB to yield a toxic cyclic octapeptide. POPB first removes 10 residues from the N-terminus. Conformational trapping of the remaining peptide forces the enzyme to release this intermediate rather than proceed to macrocyclization. The enzyme rebinds the remaining peptide in a different conformation and catalyzes macrocyclization of the N-terminal 8 residues. Expressed in basidiocarps.

Functionally, major toxin belonging to the bicyclic octapeptides amatoxins that acts by binding non-competitively to RNA polymerase II and greatly slowing the elongation of transcripts from target promoters. In Amanita exitialis (Guangzhou destroying angel), this protein is Alpha-amanitin proprotein 1.